The following is a 103-amino-acid chain: Thrombin inhibitor rhodniin (103 aa).

Kazal-like domains lie at 1–50 and 51–103; these read EGGE…PCEP and DEDE…PCRT. Disulfide bonds link Cys6–Cys31, Cys8–Cys27, Cys16–Cys48, Cys57–Cys84, Cys60–Cys80, and Cys69–Cys101.

Its subcellular location is the secreted. Functionally, thrombin-specific inhibitor. Appears to form 1:1 complexes with thrombin. Prevents blood clotting to allow the insect to feed on blood. The polypeptide is Thrombin inhibitor rhodniin (Rhodnius prolixus (Triatomid bug)).